Here is a 274-residue protein sequence, read N- to C-terminus: Large ribosomal subunit protein uL2cz (274 aa).

Disordered stretches follow at residues 1 to 25 (MAIHLYKTSTPSTRNGTVDSQVKSN) and 224 to 274 (NPVD…RRSK). A compositionally biased stretch (polar residues) spans 7–25 (KTSTPSTRNGTVDSQVKSN).

Belongs to the universal ribosomal protein uL2 family. In terms of assembly, part of the 50S ribosomal subunit.

The protein resides in the plastid. It localises to the chloroplast. This is Large ribosomal subunit protein uL2cz (rpl2-A) from Coffea arabica (Arabian coffee).